The sequence spans 309 residues: Lipoyl synthase (309 aa).

[4Fe-4S] cluster is bound by residues C37, C42, C48, C67, C71, C74, and S281. The Radical SAM core domain maps to 53–270 (DGPGTATFML…RVAETEFGFL (218 aa)).

It belongs to the radical SAM superfamily. Lipoyl synthase family. [4Fe-4S] cluster serves as cofactor.

Its subcellular location is the cytoplasm. The enzyme catalyses [[Fe-S] cluster scaffold protein carrying a second [4Fe-4S](2+) cluster] + N(6)-octanoyl-L-lysyl-[protein] + 2 oxidized [2Fe-2S]-[ferredoxin] + 2 S-adenosyl-L-methionine + 4 H(+) = [[Fe-S] cluster scaffold protein] + N(6)-[(R)-dihydrolipoyl]-L-lysyl-[protein] + 4 Fe(3+) + 2 hydrogen sulfide + 2 5'-deoxyadenosine + 2 L-methionine + 2 reduced [2Fe-2S]-[ferredoxin]. It participates in protein modification; protein lipoylation via endogenous pathway; protein N(6)-(lipoyl)lysine from octanoyl-[acyl-carrier-protein]: step 2/2. Catalyzes the radical-mediated insertion of two sulfur atoms into the C-6 and C-8 positions of the octanoyl moiety bound to the lipoyl domains of lipoate-dependent enzymes, thereby converting the octanoylated domains into lipoylated derivatives. This is Lipoyl synthase from Natronomonas pharaonis (strain ATCC 35678 / DSM 2160 / CIP 103997 / JCM 8858 / NBRC 14720 / NCIMB 2260 / Gabara) (Halobacterium pharaonis).